We begin with the raw amino-acid sequence, 345 residues long: tRNA pseudouridine synthase B (345 aa).

The Nucleophile role is filled by D39.

This sequence belongs to the pseudouridine synthase TruB family. Type 1 subfamily.

The catalysed reaction is uridine(55) in tRNA = pseudouridine(55) in tRNA. Responsible for synthesis of pseudouridine from uracil-55 in the psi GC loop of transfer RNAs. In Rickettsia africae (strain ESF-5), this protein is tRNA pseudouridine synthase B.